Reading from the N-terminus, the 201-residue chain is Probable phosphopantothenoylcysteine decarboxylase (201 aa).

FMN is bound by residues 20-22, 45-47, 98-101, and Ala-132; these read GSV, SKS, and SANT. Residues Asn-134 and 164-166 contribute to the substrate site; that span reads KLA. The active-site Proton donor is Cys-167. Substrate is bound at residue Met-175.

The protein belongs to the HFCD (homooligomeric flavin containing Cys decarboxylase) superfamily. Homotrimer. It depends on FMN as a cofactor. In terms of tissue distribution, expressed in roots, shoots, leaves, flowers, developing siliques and seeds.

The enzyme catalyses N-[(R)-4-phosphopantothenoyl]-L-cysteine + H(+) = (R)-4'-phosphopantetheine + CO2. It functions in the pathway cofactor biosynthesis; coenzyme A biosynthesis; CoA from (R)-pantothenate: step 3/5. Its function is as follows. Involved in plant growth and salt and osmotic tolerance. Catalyzes the decarboxylation of 4'-phosphopantothenoylcysteine to 4'-phosphopantetheine, a key step in coenzyme A biosynthesis. The enzyme is also able to decarboxylate pantothenoylcysteine to pantothenoylcysteamine. The protein is Probable phosphopantothenoylcysteine decarboxylase (HAL3B) of Arabidopsis thaliana (Mouse-ear cress).